A 456-amino-acid chain; its full sequence is Adenylosuccinate synthetase isozyme 2 (456 aa).

Positions 1–14 (MSISESSPAATSLP) are enriched in polar residues. The segment at 1-24 (MSISESSPAATSLPNGDCGRPRAR) is disordered. GTP is bound by residues 39–45 (GDEGKGK) and 67–69 (GHT). Asp-40 acts as the Proton acceptor in catalysis. Positions 40 and 67 each coordinate Mg(2+). Asp-40 contributes to the substrate binding site. IMP is bound by residues 40–43 (DEGK), 65–68 (NAGH), Thr-162, Arg-176, Asn-255, Thr-270, and Arg-334. Catalysis depends on His-68, which acts as the Proton donor. Residue 330 to 336 (VTTGRKR) coordinates substrate. GTP is bound by residues Arg-336, 362–364 (KLD), and 444–447 (GVGK).

The protein belongs to the adenylosuccinate synthetase family. Homodimer. Mg(2+) is required as a cofactor.

It is found in the cytoplasm. The protein resides in the mitochondrion. It carries out the reaction IMP + L-aspartate + GTP = N(6)-(1,2-dicarboxyethyl)-AMP + GDP + phosphate + 2 H(+). The protein operates within purine metabolism; AMP biosynthesis via de novo pathway; AMP from IMP: step 1/2. With respect to regulation, inhibited competitively by AMP and IMP and non-competitively by fructose 1,6-bisphosphate. Plays an important role in the de novo pathway and in the salvage pathway of purine nucleotide biosynthesis. Catalyzes the first committed step in the biosynthesis of AMP from IMP. The sequence is that of Adenylosuccinate synthetase isozyme 2 (Adss2) from Mus musculus (Mouse).